Here is a 312-residue protein sequence, read N- to C-terminus: Ribosomal RNA small subunit methyltransferase H (312 aa).

Residues 37 to 39 (GGH), D57, F83, and D104 contribute to the S-adenosyl-L-methionine site.

The protein belongs to the methyltransferase superfamily. RsmH family.

Its subcellular location is the cytoplasm. It catalyses the reaction cytidine(1402) in 16S rRNA + S-adenosyl-L-methionine = N(4)-methylcytidine(1402) in 16S rRNA + S-adenosyl-L-homocysteine + H(+). Specifically methylates the N4 position of cytidine in position 1402 (C1402) of 16S rRNA. This Malacoplasma penetrans (strain HF-2) (Mycoplasma penetrans) protein is Ribosomal RNA small subunit methyltransferase H.